The primary structure comprises 91 residues: Tachykinin-like peptide (91 aa).

A signal peptide spans 1 to 19 (MKILVAFAVIMLVSAQVLA). Residues 20-51 (AEIGLNDEPEWYSDQIQEDLPVFENFLQRIAR) constitute a propeptide that is removed on maturation. At methionine 62 the chain carries Methionine amide. Residues 64-91 (KRNNGFGQMSRKRSAERNTIHNYERRRK) are disordered. A propeptide spanning residues 66–91 (NNGFGQMSRKRSAERNTIHNYERRRK) is cleaved from the precursor. A compositionally biased stretch (basic and acidic residues) spans 76–91 (RSAERNTIHNYERRRK).

Expressed by the skin glands.

Its subcellular location is the secreted. Its function is as follows. Tachykinins are active peptides which excite neurons, evoke behavioral responses, are potent vasodilators and secretagogues, and contract (directly or indirectly) many smooth muscles. In vitro, induces contraction of guinea pig ileum smooth muscle in a dose-dependent manner. The sequence is that of Tachykinin-like peptide from Theloderma corticale (Kwangsi warty tree frog).